A 154-amino-acid polypeptide reads, in one-letter code: Ribonuclease H (154 aa).

An RNase H type-1 domain is found at 1–142 (MLKQVEIFTD…CDELARRAAG (142 aa)). Mg(2+) is bound by residues Asp10, Glu48, Asp70, and Asp134.

This sequence belongs to the RNase H family. As to quaternary structure, monomer. Mg(2+) serves as cofactor.

The protein localises to the cytoplasm. The catalysed reaction is Endonucleolytic cleavage to 5'-phosphomonoester.. In terms of biological role, endonuclease that specifically degrades the RNA of RNA-DNA hybrids. This is Ribonuclease H from Edwardsiella ictaluri (strain 93-146).